We begin with the raw amino-acid sequence, 228 residues long: 7-cyano-7-deazaguanine synthase (228 aa).

9–19 (LSGGPDSTTVL) is a binding site for ATP. Zn(2+) contacts are provided by Cys-193, Cys-203, Cys-206, and Cys-209.

This sequence belongs to the QueC family. It depends on Zn(2+) as a cofactor.

It catalyses the reaction 7-carboxy-7-deazaguanine + NH4(+) + ATP = 7-cyano-7-deazaguanine + ADP + phosphate + H2O + H(+). It participates in purine metabolism; 7-cyano-7-deazaguanine biosynthesis. Its function is as follows. Catalyzes the ATP-dependent conversion of 7-carboxy-7-deazaguanine (CDG) to 7-cyano-7-deazaguanine (preQ(0)). The polypeptide is 7-cyano-7-deazaguanine synthase (Rickettsia conorii (strain ATCC VR-613 / Malish 7)).